The sequence spans 924 residues: Isoleucine--tRNA ligase (924 aa).

Positions 57–67 match the 'HIGH' region motif; sequence PYANGDIHMGH. Glu552 contacts L-isoleucyl-5'-AMP. The 'KMSKS' region signature appears at 593–597; it reads KMSKS. Lys596 contributes to the ATP binding site. Residues Cys891, Cys894, Cys911, and Cys914 each coordinate Zn(2+).

Belongs to the class-I aminoacyl-tRNA synthetase family. IleS type 1 subfamily. In terms of assembly, monomer. Zn(2+) is required as a cofactor.

The protein localises to the cytoplasm. It carries out the reaction tRNA(Ile) + L-isoleucine + ATP = L-isoleucyl-tRNA(Ile) + AMP + diphosphate. Functionally, catalyzes the attachment of isoleucine to tRNA(Ile). As IleRS can inadvertently accommodate and process structurally similar amino acids such as valine, to avoid such errors it has two additional distinct tRNA(Ile)-dependent editing activities. One activity is designated as 'pretransfer' editing and involves the hydrolysis of activated Val-AMP. The other activity is designated 'posttransfer' editing and involves deacylation of mischarged Val-tRNA(Ile). In Geobacillus kaustophilus (strain HTA426), this protein is Isoleucine--tRNA ligase.